A 341-amino-acid polypeptide reads, in one-letter code: BZIP domain-containing transcription factor BZP4 (341 aa).

4 stretches are compositionally biased toward polar residues: residues Met1–Glu32, Leu61–Leu76, Pro128–His139, and Tyr150–Ser163. 2 disordered regions span residues Met1 to Met95 and Thr118 to Gln254. A compositionally biased stretch (low complexity) spans Ser178–Pro192. Composition is skewed to basic and acidic residues over residues Thr225–Ser234 and Glu242–Gln254. The tract at residues Lys250–Lys269 is basic motif. One can recognise a bZIP domain in the interval Lys250–Lys308. Positions Ile279 to Leu307 are leucine-zipper.

It belongs to the bZIP family.

It is found in the nucleus. It localises to the cytoplasm. Functionally, transcription factor that promotes the production of melanin, a pigment that serves as antioxidant, reactive oxygen species (ROS) scavenger and that protect fungal pathogens from radiation and host immune responses. The sequence is that of BZIP domain-containing transcription factor BZP4 from Cryptococcus neoformans var. grubii serotype A (strain H99 / ATCC 208821 / CBS 10515 / FGSC 9487) (Filobasidiella neoformans var. grubii).